The sequence spans 203 residues: Holliday junction branch migration complex subunit RuvA (203 aa).

Residues 1 to 64 (MIGRLRGIIL…EDAQLLYGFN (64 aa)) are domain I. Residues 65 to 142 (NKQERTLFKE…KGLHGDLFTP (78 aa)) form a domain II region. The interval 143-154 (AADLVLTSPAGP) is flexible linker. Residues 155–203 (TADDAEQEAVAALVALGYKPQEASRMVSKIARPDANSETLIREALRAAL) are domain III.

The protein belongs to the RuvA family. Homotetramer. Forms an RuvA(8)-RuvB(12)-Holliday junction (HJ) complex. HJ DNA is sandwiched between 2 RuvA tetramers; dsDNA enters through RuvA and exits via RuvB. An RuvB hexamer assembles on each DNA strand where it exits the tetramer. Each RuvB hexamer is contacted by two RuvA subunits (via domain III) on 2 adjacent RuvB subunits; this complex drives branch migration. In the full resolvosome a probable DNA-RuvA(4)-RuvB(12)-RuvC(2) complex forms which resolves the HJ.

It localises to the cytoplasm. Functionally, the RuvA-RuvB-RuvC complex processes Holliday junction (HJ) DNA during genetic recombination and DNA repair, while the RuvA-RuvB complex plays an important role in the rescue of blocked DNA replication forks via replication fork reversal (RFR). RuvA specifically binds to HJ cruciform DNA, conferring on it an open structure. The RuvB hexamer acts as an ATP-dependent pump, pulling dsDNA into and through the RuvAB complex. HJ branch migration allows RuvC to scan DNA until it finds its consensus sequence, where it cleaves and resolves the cruciform DNA. This chain is Holliday junction branch migration complex subunit RuvA, found in Klebsiella pneumoniae (strain 342).